A 627-amino-acid polypeptide reads, in one-letter code: (-)-alpha-pinene synthase 1, chloroplastic (627 aa).

A chloroplast-targeting transit peptide spans 1–36 (MALVSIAPLASKSCLHKSLSSSAHELKTICRTIPTL). Mg(2+) is bound by residues D378, D382, and D530. The short motif at 378–382 (DDMYD) is the DDXXD motif element.

The protein belongs to the terpene synthase family. Tpsd subfamily. It depends on Mg(2+) as a cofactor. Requires Mn(2+) as cofactor.

Its subcellular location is the plastid. It localises to the chloroplast. The enzyme catalyses (2E)-geranyl diphosphate = (1S,5S)-beta-pinene + diphosphate. It carries out the reaction (2E)-geranyl diphosphate = (1S,5S)-alpha-pinene + diphosphate. Its pathway is terpene metabolism; oleoresin biosynthesis. In terms of biological role, terpene synthase (TPS) involved in the biosynthesis of monoterpene natural products included in conifer oleoresin secretions and volatile emissions; these compounds contribute to biotic and abiotic stress defense against herbivores and pathogens. Catalyzes the conversion of (2E)-geranyl diphosphate (GPP) to (1S,5S)-beta-pinene. In Picea sitchensis (Sitka spruce), this protein is (-)-alpha-pinene synthase 1, chloroplastic.